We begin with the raw amino-acid sequence, 235 residues long: Elongation factor Tu (235 aa).

Residues 1 to 125 (KNMITGAAQM…QVDEYIPAPE (125 aa)) form the tr-type G domain. 47 to 50 (NKQD) is a GTP binding site.

Belongs to the TRAFAC class translation factor GTPase superfamily. Classic translation factor GTPase family. EF-Tu/EF-1A subfamily. As to quaternary structure, monomer.

It localises to the cytoplasm. It carries out the reaction GTP + H2O = GDP + phosphate + H(+). In terms of biological role, GTP hydrolase that promotes the GTP-dependent binding of aminoacyl-tRNA to the A-site of ribosomes during protein biosynthesis. The sequence is that of Elongation factor Tu (tufA) from Leptolyngbya ectocarpi (Phormidium ectocarpi).